The following is a 264-amino-acid chain: MNTIHATAIIDPGVTLGDKVTIGPYTVIEDDVEIGEGTRIGPHVHIASGARIGSACRIHAGAVLATEPQDLKYAGEKTQLIVGDRTVIRECVTLNRGTKASGRTVVGSDTLVMSYVHAGHDCVIGNHVVIANSVQFGGHCEVGDYAVIGGLTGVHQFVRIGRYSMVGGIARASLDVPPFVMAGGHASFRYEGLNSLGLKRRGFTAEKISMIKDVYRIIFQSGLLLSNALEKVRTDFPAEPEIVEILRFFDSGTHGRKFLRPFNS.

The protein belongs to the transferase hexapeptide repeat family. LpxA subfamily. Homotrimer.

Its subcellular location is the cytoplasm. It catalyses the reaction a (3R)-hydroxyacyl-[ACP] + UDP-N-acetyl-alpha-D-glucosamine = a UDP-3-O-[(3R)-3-hydroxyacyl]-N-acetyl-alpha-D-glucosamine + holo-[ACP]. It functions in the pathway glycolipid biosynthesis; lipid IV(A) biosynthesis; lipid IV(A) from (3R)-3-hydroxytetradecanoyl-[acyl-carrier-protein] and UDP-N-acetyl-alpha-D-glucosamine: step 1/6. Involved in the biosynthesis of lipid A, a phosphorylated glycolipid that anchors the lipopolysaccharide to the outer membrane of the cell. The chain is Acyl-[acyl-carrier-protein]--UDP-N-acetylglucosamine O-acyltransferase from Chlorobium phaeobacteroides (strain DSM 266 / SMG 266 / 2430).